A 488-amino-acid polypeptide reads, in one-letter code: ATP synthase subunit beta (488 aa).

164–171 (GGAGVGKT) contacts ATP.

It belongs to the ATPase alpha/beta chains family. F-type ATPases have 2 components, CF(1) - the catalytic core - and CF(0) - the membrane proton channel. CF(1) has five subunits: alpha(3), beta(3), gamma(1), delta(1), epsilon(1). CF(0) has four main subunits: a(1), b(1), b'(1) and c(9-12).

It localises to the cellular thylakoid membrane. The catalysed reaction is ATP + H2O + 4 H(+)(in) = ADP + phosphate + 5 H(+)(out). Its function is as follows. Produces ATP from ADP in the presence of a proton gradient across the membrane. The catalytic sites are hosted primarily by the beta subunits. The protein is ATP synthase subunit beta of Prochlorococcus marinus (strain SARG / CCMP1375 / SS120).